A 255-amino-acid polypeptide reads, in one-letter code: Imidazole glycerol phosphate synthase subunit HisF (255 aa).

Catalysis depends on residues D11 and D130.

Belongs to the HisA/HisF family. In terms of assembly, heterodimer of HisH and HisF.

The protein resides in the cytoplasm. It catalyses the reaction 5-[(5-phospho-1-deoxy-D-ribulos-1-ylimino)methylamino]-1-(5-phospho-beta-D-ribosyl)imidazole-4-carboxamide + L-glutamine = D-erythro-1-(imidazol-4-yl)glycerol 3-phosphate + 5-amino-1-(5-phospho-beta-D-ribosyl)imidazole-4-carboxamide + L-glutamate + H(+). Its pathway is amino-acid biosynthesis; L-histidine biosynthesis; L-histidine from 5-phospho-alpha-D-ribose 1-diphosphate: step 5/9. IGPS catalyzes the conversion of PRFAR and glutamine to IGP, AICAR and glutamate. The HisF subunit catalyzes the cyclization activity that produces IGP and AICAR from PRFAR using the ammonia provided by the HisH subunit. This Akkermansia muciniphila (strain ATCC BAA-835 / DSM 22959 / JCM 33894 / BCRC 81048 / CCUG 64013 / CIP 107961 / Muc) protein is Imidazole glycerol phosphate synthase subunit HisF.